The sequence spans 137 residues: MPPKSRSTGPKKTQKARRRDKKNVPHGAAHIKSTFNNTIVSITDPAGNVISWASSGHVGFKGSRKSTPFAAQLAAENAARKAQEHGVKKVDVFVKGPGSGRETAIRSLQAAGLEVGTISDVTPQPHNGCRPPKRRRV.

A compositionally biased stretch (polar residues) spans 1–11 (MPPKSRSTGPK). Disordered regions lie at residues 1 to 28 (MPPKSRSTGPKKTQKARRRDKKNVPHGA) and 117 to 137 (TISDVTPQPHNGCRPPKRRRV). Over residues 12–21 (KTQKARRRDK) the composition is skewed to basic residues.

This sequence belongs to the universal ribosomal protein uS11 family. Part of the 30S ribosomal subunit. Interacts with proteins S7 and S18. Binds to IF-3.

Its function is as follows. Located on the platform of the 30S subunit, it bridges several disparate RNA helices of the 16S rRNA. Forms part of the Shine-Dalgarno cleft in the 70S ribosome. This chain is Small ribosomal subunit protein uS11, found in Rhodococcus opacus (strain B4).